Reading from the N-terminus, the 167-residue chain is Crossover junction endodeoxyribonuclease RuvC (167 aa).

Catalysis depends on residues Asp-11, Glu-71, and Asp-143. Mg(2+)-binding residues include Asp-11, Glu-71, and Asp-143.

It belongs to the RuvC family. As to quaternary structure, homodimer which binds Holliday junction (HJ) DNA. The HJ becomes 2-fold symmetrical on binding to RuvC with unstacked arms; it has a different conformation from HJ DNA in complex with RuvA. In the full resolvosome a probable DNA-RuvA(4)-RuvB(12)-RuvC(2) complex forms which resolves the HJ. Requires Mg(2+) as cofactor.

The protein resides in the cytoplasm. It catalyses the reaction Endonucleolytic cleavage at a junction such as a reciprocal single-stranded crossover between two homologous DNA duplexes (Holliday junction).. Functionally, the RuvA-RuvB-RuvC complex processes Holliday junction (HJ) DNA during genetic recombination and DNA repair. Endonuclease that resolves HJ intermediates. Cleaves cruciform DNA by making single-stranded nicks across the HJ at symmetrical positions within the homologous arms, yielding a 5'-phosphate and a 3'-hydroxyl group; requires a central core of homology in the junction. The consensus cleavage sequence is 5'-(A/T)TT(C/G)-3'. Cleavage occurs on the 3'-side of the TT dinucleotide at the point of strand exchange. HJ branch migration catalyzed by RuvA-RuvB allows RuvC to scan DNA until it finds its consensus sequence, where it cleaves and resolves the cruciform DNA. The sequence is that of Crossover junction endodeoxyribonuclease RuvC from Acidiphilium cryptum (strain JF-5).